Here is a 379-residue protein sequence, read N- to C-terminus: Homoserine O-acetyltransferase (379 aa).

The AB hydrolase-1 domain occupies 52–356 (NVVMVLHALT…IRGHDGFLVE (305 aa)). The active-site Nucleophile is serine 157. Arginine 227 lines the substrate pocket. Active-site residues include aspartate 320 and histidine 350. Substrate is bound at residue aspartate 351.

This sequence belongs to the AB hydrolase superfamily. MetX family. In terms of assembly, homodimer.

The protein resides in the cytoplasm. The catalysed reaction is L-homoserine + acetyl-CoA = O-acetyl-L-homoserine + CoA. The protein operates within amino-acid biosynthesis; L-methionine biosynthesis via de novo pathway; O-acetyl-L-homoserine from L-homoserine: step 1/1. In terms of biological role, transfers an acetyl group from acetyl-CoA to L-homoserine, forming acetyl-L-homoserine. The sequence is that of Homoserine O-acetyltransferase from Mycobacterium marinum (strain ATCC BAA-535 / M).